The following is a 636-amino-acid chain: Threonine--tRNA ligase (636 aa).

One can recognise a TGS domain in the interval 1–63 (MNEINVTLPD…ADGARVEIVT (63 aa)). The catalytic stretch occupies residues 243 to 534 (DHRKLGRELD…LIEHFAGNFP (292 aa)). Cys-335, His-386, and His-511 together coordinate Zn(2+).

It belongs to the class-II aminoacyl-tRNA synthetase family. In terms of assembly, homodimer. The cofactor is Zn(2+).

The protein resides in the cytoplasm. It catalyses the reaction tRNA(Thr) + L-threonine + ATP = L-threonyl-tRNA(Thr) + AMP + diphosphate + H(+). In terms of biological role, catalyzes the attachment of threonine to tRNA(Thr) in a two-step reaction: L-threonine is first activated by ATP to form Thr-AMP and then transferred to the acceptor end of tRNA(Thr). Also edits incorrectly charged L-seryl-tRNA(Thr). This chain is Threonine--tRNA ligase, found in Geobacter sp. (strain M21).